Consider the following 40-residue polypeptide: Photosystem II reaction center protein J (40 aa).

The helical transmembrane segment at 8 to 28 (IPLWLIGTVTGIPVIGSIGIF) threads the bilayer.

It belongs to the PsbJ family. In terms of assembly, PSII is composed of 1 copy each of membrane proteins PsbA, PsbB, PsbC, PsbD, PsbE, PsbF, PsbH, PsbI, PsbJ, PsbK, PsbL, PsbM, PsbT, PsbX, PsbY, PsbZ, Psb30/Ycf12, at least 3 peripheral proteins of the oxygen-evolving complex and a large number of cofactors. It forms dimeric complexes.

It localises to the plastid. It is found in the chloroplast thylakoid membrane. Functionally, one of the components of the core complex of photosystem II (PSII). PSII is a light-driven water:plastoquinone oxidoreductase that uses light energy to abstract electrons from H(2)O, generating O(2) and a proton gradient subsequently used for ATP formation. It consists of a core antenna complex that captures photons, and an electron transfer chain that converts photonic excitation into a charge separation. The protein is Photosystem II reaction center protein J of Chloranthus spicatus (Chulantree).